A 506-amino-acid chain; its full sequence is Cysteine protease 1 (506 aa).

Positions 1–21 (MTSSRPSGRDSTGWQETVSNT) are disordered. Cys-226 functions as the Nucleophile in the catalytic mechanism. Catalysis depends on residues Asp-399 and His-401.

Belongs to the peptidase C54 family.

Its subcellular location is the cytoplasm. It is found in the nucleus. It localises to the preautophagosomal structure. It catalyses the reaction [protein]-C-terminal L-amino acid-glycyl-phosphatidylethanolamide + H2O = [protein]-C-terminal L-amino acid-glycine + a 1,2-diacyl-sn-glycero-3-phosphoethanolamine. Cysteine protease that plays a key role in cytoplasm to vacuole transport (Cvt) and autophagy by mediating both proteolytic activation and delipidation of ATG8. Required for selective autophagic degradation of the nucleus (nucleophagy) as well as for mitophagy which contributes to regulate mitochondrial quantity and quality by eliminating the mitochondria to a basal level to fulfill cellular energy requirements and preventing excess ROS production. The protease activity is required for proteolytic activation of ATG8: cleaves the C-terminal amino acid of ATG8 to reveal a C-terminal glycine. ATG8 ubiquitin-like activity requires the exposure of the glycine at the C-terminus for its conjugation to phosphatidylethanolamine (PE) and its insertion to membranes, which is necessary for autophagy. The ATG8-PE conjugate mediates tethering between adjacent membranes and stimulates membrane hemifusion, leading to expansion of the autophagosomal membrane during autophagy. In addition to the protease activity, also catalyzes deconjugation of PE-conjugated forms of ATG8 during macroautophagy: ATG8 delipidation is required to release the protein from membranes, which facilitates multiple events during macroautophagy, and especially for efficient autophagosome biogenesis, the assembly of ATG9-containing tubulovesicular clusters into phagophores/autophagosomes, and for the disassembly of PAS-associated ATG components. ATG8 delipidation by ATG4 also recycles ATG8-PE generated on inappropriate membranes to maintain a reservoir of unlipidated ATG8 that is required for autophagosome formation at the PAS. In Neurospora crassa (strain ATCC 24698 / 74-OR23-1A / CBS 708.71 / DSM 1257 / FGSC 987), this protein is Cysteine protease 1 (cpr-1).